Reading from the N-terminus, the 336-residue chain is Apyrase (336 aa).

The first 21 residues, 1–21 (MFLKFCVVAFAICLSINLSEG), serve as a signal peptide directing secretion. N-linked (GlcNAc...) asparagine glycosylation occurs at Asn-209.

Belongs to the apyrase family. The cofactor is Ca(2+). As to expression, salivary gland (at protein level).

The protein localises to the secreted. The enzyme catalyses a ribonucleoside 5'-triphosphate + 2 H2O = a ribonucleoside 5'-phosphate + 2 phosphate + 2 H(+). In terms of biological role, facilitates hematophagy by inhibiting ADP- and collagen-dependent platelet aggregation in the host. Cleaves adenosine triphosphate (ATP) and adenosine diphosphate (ADP) to adenosine monophosphate (AMP) and inorganic phosphate in calcium-dependent manner. This Phlebotomus duboscqi (Sandfly) protein is Apyrase.